A 243-amino-acid polypeptide reads, in one-letter code: DNA repair protein RecO (243 aa).

Belongs to the RecO family.

Its function is as follows. Involved in DNA repair and RecF pathway recombination. The chain is DNA repair protein RecO from Bartonella quintana (strain Toulouse) (Rochalimaea quintana).